The following is a 236-amino-acid chain: 2-C-methyl-D-erythritol 4-phosphate cytidylyltransferase (236 aa).

Belongs to the IspD/TarI cytidylyltransferase family. IspD subfamily. As to quaternary structure, homodimer.

It catalyses the reaction 2-C-methyl-D-erythritol 4-phosphate + CTP + H(+) = 4-CDP-2-C-methyl-D-erythritol + diphosphate. It functions in the pathway isoprenoid biosynthesis; isopentenyl diphosphate biosynthesis via DXP pathway; isopentenyl diphosphate from 1-deoxy-D-xylulose 5-phosphate: step 2/6. Catalyzes the formation of 4-diphosphocytidyl-2-C-methyl-D-erythritol from CTP and 2-C-methyl-D-erythritol 4-phosphate (MEP). The chain is 2-C-methyl-D-erythritol 4-phosphate cytidylyltransferase from Klebsiella pneumoniae subsp. pneumoniae (strain ATCC 700721 / MGH 78578).